The sequence spans 312 residues: Dehydrogenase/reductase SDR family member 7C (312 aa).

Residues 1–18 (MGVMAMLMLPLLLLGISG) form the signal peptide. 5 residues coordinate NAD(+): Ser47, Leu49, Tyr192, Lys196, and Ser227. Tyr192 serves as the catalytic Proton acceptor.

This sequence belongs to the short-chain dehydrogenases/reductases (SDR) family.

Its subcellular location is the sarcoplasmic reticulum membrane. The enzyme catalyses all-trans-retinol + NAD(+) = all-trans-retinal + NADH + H(+). In terms of biological role, NADH-dependent oxidoreductase which catalyzes the oxidation of all-trans-retinol to all-trans-retinal. Plays a role in the regulation of cardiac and skeletal muscle metabolic functions. Maintains Ca(2+) intracellular homeostasis by repressing Ca(2+) release from the sarcoplasmic reticulum (SR) in myotubes, possibly through local alternations in NAD/NADH or retinol/retinal. Also plays a role in Ca(2+) homeostasis by controlling Ca(2+) overload in the cytosol and the SR in myotubes. Involved in glucose uptake into skeletal muscles and muscle performance by activating PI3K and mTORC2-mediated AKT1 phosphorylation signaling pathways, possibly through the action of its downstream catalytic product all-trans-retinoic acid. The chain is Dehydrogenase/reductase SDR family member 7C from Homo sapiens (Human).